A 150-amino-acid chain; its full sequence is 6,7-dimethyl-8-ribityllumazine synthase (150 aa).

5-amino-6-(D-ribitylamino)uracil-binding positions include Phe11, 43-45, and 67-69; these read VYD and AVI. 72–73 provides a ligand contact to (2S)-2-hydroxy-3-oxobutyl phosphate; it reads AT. His75 functions as the Proton donor in the catalytic mechanism. Leu100 is a 5-amino-6-(D-ribitylamino)uracil binding site. Residue Arg115 coordinates (2S)-2-hydroxy-3-oxobutyl phosphate.

The protein belongs to the DMRL synthase family.

It catalyses the reaction (2S)-2-hydroxy-3-oxobutyl phosphate + 5-amino-6-(D-ribitylamino)uracil = 6,7-dimethyl-8-(1-D-ribityl)lumazine + phosphate + 2 H2O + H(+). Its pathway is cofactor biosynthesis; riboflavin biosynthesis; riboflavin from 2-hydroxy-3-oxobutyl phosphate and 5-amino-6-(D-ribitylamino)uracil: step 1/2. Catalyzes the formation of 6,7-dimethyl-8-ribityllumazine by condensation of 5-amino-6-(D-ribitylamino)uracil with 3,4-dihydroxy-2-butanone 4-phosphate. This is the penultimate step in the biosynthesis of riboflavin. This Pyrobaculum arsenaticum (strain DSM 13514 / JCM 11321 / PZ6) protein is 6,7-dimethyl-8-ribityllumazine synthase.